We begin with the raw amino-acid sequence, 686 residues long: tRNA wybutosine-synthesizing protein 4 (686 aa).

Basic and acidic residues predominate over residues 1 to 10; it reads MGPRSRERRA. Residues 1–21 are disordered; sequence MGPRSRERRAGAVQNTNDSSA. S-adenosyl-L-methionine is bound by residues Arg-59, Gly-89, Asp-114, 161–162, and Glu-188; that span reads DL.

The protein belongs to the methyltransferase superfamily. LCMT family. In terms of assembly, interacts with RNF144B/IBRDC2.

The enzyme catalyses 7-[(3S)-3-amino-3-carboxypropyl]wyosine(37) in tRNA(Phe) + S-adenosyl-L-methionine = 7-[(3S)-(3-amino-3-methoxycarbonyl)propyl]wyosine(37) in tRNA(Phe) + S-adenosyl-L-homocysteine. It carries out the reaction 7-[(3S)-(3-amino-3-methoxycarbonyl)propyl]wyosine(37) in tRNA(Phe) + S-adenosyl-L-methionine + CO2 = wybutosine(37) in tRNA(Phe) + S-adenosyl-L-homocysteine + 2 H(+). It participates in tRNA modification; wybutosine-tRNA(Phe) biosynthesis. In terms of biological role, probable S-adenosyl-L-methionine-dependent methyltransferase that acts as a component of the wybutosine biosynthesis pathway. Wybutosine is a hyper modified guanosine with a tricyclic base found at the 3'-position adjacent to the anticodon of eukaryotic phenylalanine tRNA. May methylate the carboxyl group of leucine residues to form alpha-leucine ester residues. The sequence is that of tRNA wybutosine-synthesizing protein 4 (LCMT2) from Homo sapiens (Human).